We begin with the raw amino-acid sequence, 1147 residues long: ATP-dependent helicase/deoxyribonuclease subunit B (1147 aa).

8-15 (GRAGSGKS) is a binding site for ATP. The [4Fe-4S] cluster site is built by Cys-786, Cys-1106, Cys-1109, and Cys-1115.

This sequence belongs to the helicase family. AddB/RexB type 1 subfamily. As to quaternary structure, heterodimer of AddA and AddB. The cofactor is Mg(2+). Requires [4Fe-4S] cluster as cofactor.

The heterodimer acts as both an ATP-dependent DNA helicase and an ATP-dependent, dual-direction single-stranded exonuclease. Recognizes the chi site generating a DNA molecule suitable for the initiation of homologous recombination. The AddB subunit has 5' -&gt; 3' nuclease activity but not helicase activity. This Clostridium botulinum (strain Loch Maree / Type A3) protein is ATP-dependent helicase/deoxyribonuclease subunit B.